The primary structure comprises 195 residues: uncharacterized protein (195 aa).

An N-terminal signal peptide occupies residues 1-16; sequence MIRTIIVFMLLTISFG.

This is an uncharacterized protein from Acanthamoeba polyphaga mimivirus (APMV).